The chain runs to 734 residues: Photosystem I P700 chlorophyll a apoprotein A2 (734 aa).

Helical transmembrane passes span 46-69 (IFAS…FHVA), 135-158 (LYTG…LHLQ), 175-199 (LNHH…HVAI), 273-291 (IAHH…GHMY), 330-353 (LHFQ…QHMY), 369-395 (AALY…IFFI), 417-439 (AIIS…LYVH), and 517-535 (FLVH…SIPV). 2 residues coordinate [4Fe-4S] cluster: cysteine 559 and cysteine 568. 2 consecutive transmembrane segments (helical) span residues 575-596 (AFYL…YWHW) and 643-665 (LSVW…MFLI). Chlorophyll a-binding residues include histidine 654, methionine 662, and tyrosine 670. Tryptophan 671 contacts phylloquinone. Residues 707–727 (LVGLAHFSVGYIFTYAAFLIA) form a helical membrane-spanning segment.

This sequence belongs to the PsaA/PsaB family. The PsaA/B heterodimer binds the P700 chlorophyll special pair and subsequent electron acceptors. PSI consists of a core antenna complex that captures photons, and an electron transfer chain that converts photonic excitation into a charge separation. The eukaryotic PSI reaction center is composed of at least 11 subunits. P700 is a chlorophyll a/chlorophyll a' dimer, A0 is one or more chlorophyll a, A1 is one or both phylloquinones and FX is a shared 4Fe-4S iron-sulfur center. is required as a cofactor.

The protein resides in the plastid. The protein localises to the chloroplast thylakoid membrane. It catalyses the reaction reduced [plastocyanin] + hnu + oxidized [2Fe-2S]-[ferredoxin] = oxidized [plastocyanin] + reduced [2Fe-2S]-[ferredoxin]. PsaA and PsaB bind P700, the primary electron donor of photosystem I (PSI), as well as the electron acceptors A0, A1 and FX. PSI is a plastocyanin-ferredoxin oxidoreductase, converting photonic excitation into a charge separation, which transfers an electron from the donor P700 chlorophyll pair to the spectroscopically characterized acceptors A0, A1, FX, FA and FB in turn. Oxidized P700 is reduced on the lumenal side of the thylakoid membrane by plastocyanin. This is Photosystem I P700 chlorophyll a apoprotein A2 from Angiopteris evecta (Mule's foot fern).